The chain runs to 565 residues: Carboxylesterase 1D (565 aa).

An N-terminal signal peptide occupies residues 1–18; sequence MRLYPLVWLFLAACTAWG. An N-linked (GlcNAc...) asparagine glycan is attached at Asn79. Cysteines 87 and 116 form a disulfide. The active-site Acyl-ester intermediate is Ser221. The cysteines at positions 273 and 284 are disulfide-linked. Residue Glu353 is the Charge relay system of the active site. Position 382 is an N6-succinyllysine (Lys382). The active-site Charge relay system is His466. An N-linked (GlcNAc...) asparagine glycan is attached at Asn489. A Prevents secretion from ER motif is present at residues 562–565; it reads HVEL.

This sequence belongs to the type-B carboxylesterase/lipase family. As to quaternary structure, homotrimer. As to expression, detected in liver, lung and testis, but not in kidney (at protein level).

It is found in the endoplasmic reticulum lumen. The protein localises to the cytoplasm. It localises to the cytosol. The protein resides in the lipid droplet. Its subcellular location is the microsome. The catalysed reaction is all-trans-retinyl hexadecanoate + H2O = all-trans-retinol + hexadecanoate + H(+). It carries out the reaction a carboxylic ester + H2O = an alcohol + a carboxylate + H(+). The enzyme catalyses a long-chain fatty acyl ethyl ester + H2O = a long-chain fatty acid + ethanol + H(+). With respect to regulation, FAEE-synthesizing and PNPB-hydrolyzing activities are both inhibited by DFP. In terms of biological role, major lipase in white adipose tissue. Involved in the metabolism of xenobiotics and of natural substrates. Hydrolyzes triacylglycerols and monoacylglycerols, with a preference for monoacylglycerols. The susceptibility of the substrate increases with decreasing acyl chain length of the fatty acid moiety. Catalyzes the synthesis of fatty acid ethyl esters. Hydrolyzes retinyl esters. The polypeptide is Carboxylesterase 1D (Rattus norvegicus (Rat)).